Reading from the N-terminus, the 444-residue chain is MDSSAQQLWHNLLERLKLLLTRPAFETWFQTATVKEWQNDRLVIQAANPFILNHLQKNYLSTIAEVVQDIVGYPVEIQLTAQQGDLIAIFQPHTSLESELSPTNQLNPKYNFSRFVVGPTNRMAHAAALAVAELPGREFNPLFLCGGVGLGKTHLMQAIGHYRLELYPQSRVFYVSTEQFTNDLITAIRQDSMESFRNHYRHADILLVDDLQFIEGKEYTQEEFFHTFNTLHEAGKQVVLASDRLPKQIPSLQDRLISRFSMGLVADIQAPDIETRMAILQKKAEYENLRLPREVIEYIAVNYTSNIRELEGALIRATTYISISGLPMTVENIAPVLNPPMAKIATSPEIIMAVVAEKFQLSIADLKGNSRRREISFARQIGMYLMRQHTDLSLPRIGEEFGGKDHTTVIYSCDKINLSQHQDRQLQEILAQLIERINSLSRNQ.

The interval 1 to 73 (MDSSAQQLWH…AEVVQDIVGY (73 aa)) is domain I, interacts with DnaA modulators. The domain II stretch occupies residues 73 to 104 (YPVEIQLTAQQGDLIAIFQPHTSLESELSPTN). The interval 105 to 321 (QLNPKYNFSR…GALIRATTYI (217 aa)) is domain III, AAA+ region. ATP is bound by residues G149, G151, K152, and T153. The interval 322–444 (SISGLPMTVE…ERINSLSRNQ (123 aa)) is domain IV, binds dsDNA.

It belongs to the DnaA family. Oligomerizes as a right-handed, spiral filament on DNA at oriC.

It localises to the cytoplasm. Functionally, plays an essential role in the initiation and regulation of chromosomal replication. ATP-DnaA binds to the origin of replication (oriC) to initiate formation of the DNA replication initiation complex once per cell cycle. Binds the DnaA box (a 9 base pair repeat at the origin) and separates the double-stranded (ds)DNA. Forms a right-handed helical filament on oriC DNA; dsDNA binds to the exterior of the filament while single-stranded (ss)DNA is stabiized in the filament's interior. The ATP-DnaA-oriC complex binds and stabilizes one strand of the AT-rich DNA unwinding element (DUE), permitting loading of DNA polymerase. After initiation quickly degrades to an ADP-DnaA complex that is not apt for DNA replication. Binds acidic phospholipids. In Microcystis aeruginosa (strain NIES-843 / IAM M-2473), this protein is Chromosomal replication initiator protein DnaA.